The primary structure comprises 215 residues: Pyrrolidone-carboxylate peptidase (215 aa).

Residues Glu-78, Cys-141, and His-165 contribute to the active site.

Belongs to the peptidase C15 family. As to quaternary structure, homotetramer.

The protein resides in the cytoplasm. It catalyses the reaction Release of an N-terminal pyroglutamyl group from a polypeptide, the second amino acid generally not being Pro.. Its function is as follows. Removes 5-oxoproline from various penultimate amino acid residues except L-proline. The polypeptide is Pyrrolidone-carboxylate peptidase (Lactobacillus johnsonii (strain CNCM I-12250 / La1 / NCC 533)).